Reading from the N-terminus, the 301-residue chain is Probable alpha-L-glutamate ligase (301 aa).

An ATP-grasp domain is found at 104-287 (LQLLSRKGIG…VAGMIVEFIE (184 aa)). ATP is bound by residues Lys141, 178-179 (EF), Asp187, and 211-213 (RSN). Mg(2+) is bound by residues Asp248, Glu260, and Asn262. Positions 248, 260, and 262 each coordinate Mn(2+).

The protein belongs to the RimK family. Mg(2+) is required as a cofactor. It depends on Mn(2+) as a cofactor.

The protein is Probable alpha-L-glutamate ligase of Teredinibacter turnerae (strain ATCC 39867 / T7901).